The primary structure comprises 380 residues: Guanine nucleotide-binding protein alpha-1 subunit (380 aa).

The tract at residues 1–25 (MGSSCSRSHSLSEAETTKNAKSADI) is disordered. The N-myristoyl glycine moiety is linked to residue glycine 2. The S-palmitoyl cysteine moiety is linked to residue cysteine 5. Over residues 10–25 (SLSEAETTKNAKSADI) the composition is skewed to basic and acidic residues. One can recognise a G-alpha domain in the interval 38–380 (HIHKLLLLGA…ESMRRSREGT (343 aa)). The G1 motif stretch occupies residues 41 to 54 (KLLLLGAGESGKST). Glutamate 49, serine 50, glycine 51, lysine 52, serine 53, threonine 54, aspartate 163, leucine 188, tyrosine 189, threonine 194, glycine 222, asparagine 288, lysine 289, aspartate 291, and alanine 356 together coordinate GTP. Serine 53 serves as a coordination point for Mg(2+). The segment at 186–194 (DVLYARVRT) is G2 motif. Residue threonine 194 coordinates Mg(2+). The G3 motif stretch occupies residues 215 to 224 (YRLYDVGGQR). Positions 284 to 291 (ILFLNKFD) are G4 motif. The tract at residues 354–359 (TTALDQ) is G5 motif.

This sequence belongs to the G-alpha family. G proteins are composed of 3 units; alpha, beta and gamma. The alpha chain contains the guanine nucleotide binding site. Interacts with COLD1. Mg(2+) is required as a cofactor.

It is found in the cell membrane. In terms of biological role, guanine nucleotide-binding proteins (G proteins) are involved as modulators or transducers in various transmembrane signaling systems. May function in a signal transduction pathway required for normal growth and development of internodes, leaves, panicles and seeds. Involved in gibberellin signal transduction. Involved in R gene-mediated disease resistance. Functions upstream of the small GTPase RAC1 in the early steps of signaling. Involved in brassinosteroid response. May not be a signaling molecule in BRI1-mediated perception or transduction. This chain is Guanine nucleotide-binding protein alpha-1 subunit (GPA1), found in Oryza sativa subsp. indica (Rice).